Here is a 204-residue protein sequence, read N- to C-terminus: uncharacterized protein (204 aa).

A helical transmembrane segment spans residues 63 to 83; it reads SLLLSMVASVTAAGGNAAIVG.

The protein localises to the membrane. This is an uncharacterized protein from Mycobacterium tuberculosis (strain ATCC 25618 / H37Rv).